A 481-amino-acid chain; its full sequence is Aspartyl/glutamyl-tRNA(Asn/Gln) amidotransferase subunit B (481 aa).

Belongs to the GatB/GatE family. GatB subfamily. Heterotrimer of A, B and C subunits.

It catalyses the reaction L-glutamyl-tRNA(Gln) + L-glutamine + ATP + H2O = L-glutaminyl-tRNA(Gln) + L-glutamate + ADP + phosphate + H(+). The catalysed reaction is L-aspartyl-tRNA(Asn) + L-glutamine + ATP + H2O = L-asparaginyl-tRNA(Asn) + L-glutamate + ADP + phosphate + 2 H(+). Its function is as follows. Allows the formation of correctly charged Asn-tRNA(Asn) or Gln-tRNA(Gln) through the transamidation of misacylated Asp-tRNA(Asn) or Glu-tRNA(Gln) in organisms which lack either or both of asparaginyl-tRNA or glutaminyl-tRNA synthetases. The reaction takes place in the presence of glutamine and ATP through an activated phospho-Asp-tRNA(Asn) or phospho-Glu-tRNA(Gln). In Pseudomonas syringae pv. syringae (strain B728a), this protein is Aspartyl/glutamyl-tRNA(Asn/Gln) amidotransferase subunit B.